The sequence spans 132 residues: Peptide methionine sulfoxide reductase MsrB (132 aa).

A MsrB domain is found at 9–131 (DAQWRAELSP…NSASLSFHPK (123 aa)). Zn(2+) is bound by residues C48, C51, C97, and C100. C120 serves as the catalytic Nucleophile.

The protein belongs to the MsrB Met sulfoxide reductase family. Zn(2+) is required as a cofactor.

It carries out the reaction L-methionyl-[protein] + [thioredoxin]-disulfide + H2O = L-methionyl-(R)-S-oxide-[protein] + [thioredoxin]-dithiol. The polypeptide is Peptide methionine sulfoxide reductase MsrB (Thiobacillus denitrificans (strain ATCC 25259 / T1)).